Reading from the N-terminus, the 494-residue chain is Nuclear distribution protein PAC1 (494 aa).

In terms of domain architecture, LisH spans 14-46 (QKNELDKSVLRYLNWNYKQTVRHEHAQDYESVR). Positions 90–123 (NSIVRLQKKIIELEQNTETLVSQIKDLNTQVSEL) form a coiled coil. WD repeat units follow at residues 153–192 (NVES…IPLA), 196–244 (SHTK…CKFQ), 251–292 (GHEH…SLKT), 295–334 (PHSQ…SVGT), 347–395 (HFIE…LMAH), 415–454 (GHLS…HVWE), and 457–492 (HTGF…SNVF).

Belongs to the WD repeat LIS1/nudF family. In terms of assembly, self-associates. Interacts with NDL1 and dynein.

It is found in the cytoplasm. The protein localises to the cytoskeleton. It localises to the spindle pole. In terms of biological role, positively regulates the activity of the minus-end directed microtubule motor protein dynein. Plays a central role in positioning the mitotic spindle at the bud neck during cell division. Targets cytoplasmic dynein to microtubule plus ends, thereby promoting dynein-mediated microtubule sliding along the bud cortex and consequently the movement of the mitotic spindle to the bud neck. The protein is Nuclear distribution protein PAC1 of Saccharomyces cerevisiae (strain Lalvin EC1118 / Prise de mousse) (Baker's yeast).